The primary structure comprises 198 residues: Large ribosomal subunit protein bL25 (198 aa).

This sequence belongs to the bacterial ribosomal protein bL25 family. CTC subfamily. Part of the 50S ribosomal subunit; part of the 5S rRNA/L5/L18/L25 subcomplex. Contacts the 5S rRNA. Binds to the 5S rRNA independently of L5 and L18.

In terms of biological role, this is one of the proteins that binds to the 5S RNA in the ribosome where it forms part of the central protuberance. The chain is Large ribosomal subunit protein bL25 from Nitrosomonas europaea (strain ATCC 19718 / CIP 103999 / KCTC 2705 / NBRC 14298).